A 326-amino-acid chain; its full sequence is Delta-aminolevulinic acid dehydratase (326 aa).

Zn(2+) is bound by residues Cys-119, Cys-121, and Cys-129. Lys-198 serves as the catalytic Schiff-base intermediate with substrate. 5-aminolevulinate is bound by residues Arg-208 and Arg-220. Residue Glu-236 participates in Mg(2+) binding. Lys-251 serves as the catalytic Schiff-base intermediate with substrate. 2 residues coordinate 5-aminolevulinate: Ser-277 and Tyr-316.

It belongs to the ALAD family. Homooctamer. The cofactor is Zn(2+).

The enzyme catalyses 2 5-aminolevulinate = porphobilinogen + 2 H2O + H(+). The protein operates within porphyrin-containing compound metabolism; protoporphyrin-IX biosynthesis; coproporphyrinogen-III from 5-aminolevulinate: step 1/4. Functionally, catalyzes an early step in the biosynthesis of tetrapyrroles. Binds two molecules of 5-aminolevulinate per subunit, each at a distinct site, and catalyzes their condensation to form porphobilinogen. This is Delta-aminolevulinic acid dehydratase (hemB) from Synechococcus elongatus (strain ATCC 33912 / PCC 7942 / FACHB-805) (Anacystis nidulans R2).